Here is a 116-residue protein sequence, read N- to C-terminus: Nucleoid-associated protein P9515_00191 (116 aa).

Positions 89-98 are enriched in basic and acidic residues; that stretch reads STTTMKERMN. The interval 89–116 is disordered; sequence STTTMKERMNDLTGGLNLNLPGLDNNDS. Positions 99–116 are enriched in low complexity; it reads DLTGGLNLNLPGLDNNDS.

This sequence belongs to the YbaB/EbfC family. As to quaternary structure, homodimer.

Its subcellular location is the cytoplasm. The protein localises to the nucleoid. In terms of biological role, binds to DNA and alters its conformation. May be involved in regulation of gene expression, nucleoid organization and DNA protection. The polypeptide is Nucleoid-associated protein P9515_00191 (Prochlorococcus marinus (strain MIT 9515)).